Reading from the N-terminus, the 739-residue chain is G2 and S phase-expressed protein 1 (739 aa).

Positions 1–11 (MEGGGGRDEPS) are enriched in basic and acidic residues. The disordered stretch occupies residues 1–20 (MEGGGGRDEPSACRAGDVNM). A Phosphoserine modification is found at Ser91. 3 disordered regions span residues 116 to 136 (SRNQ…GVER), 149 to 306 (EKEK…AIPV), and 320 to 639 (PGST…GDAA). Basic and acidic residues predominate over residues 149-165 (EKEKEMKKSPTSLKRET). Ser157 carries the post-translational modification Phosphoserine. A Phosphothreonine modification is found at Thr159. Phosphoserine occurs at positions 171, 187, 208, 247, and 262. The span at 181 to 195 (PRLLASSPALPSSGA) shows a compositional bias: low complexity. Over residues 268–280 (IPAEKESHRDVLP) the composition is skewed to basic and acidic residues. 2 stretches are compositionally biased toward low complexity: residues 284 to 294 (APGAVNVPAAG) and 330 to 342 (SSSG…ASSA). Phosphoserine is present on Ser331. Residues 360–372 (PANSSRPLSNISK) are compositionally biased toward polar residues. Over residues 411 to 424 (TAPPSASPTQPQTP) the composition is skewed to low complexity. Composition is skewed to polar residues over residues 430–446 (WLNS…LNKT) and 455–470 (CLNS…TNQF). A Phosphoserine modification is found at Ser480. Residues 481-522 (PDSSTPKLSRAQRPQSCTSVGRVTVHSTPVRRSSGPAPQSLL) are compositionally biased toward polar residues. Thr485 bears the Phosphothreonine mark. Residues Ser496, Ser499, Ser514, Ser520, Ser523, and Ser528 each carry the phosphoserine modification. Thr532 bears the Phosphothreonine mark. Residues Ser535 and Ser555 each carry the phosphoserine modification. Residues 577–590 (EPTRESNRKTDSRL) are compositionally biased toward basic and acidic residues. Residues Ser594 and Ser611 each carry the phosphoserine modification. Thr696 is modified (phosphothreonine). Phosphoserine occurs at positions 707, 717, 718, 724, and 734.

In terms of processing, phosphorylated in mitosis.

The protein localises to the cytoplasm. It is found in the cytoskeleton. In terms of biological role, may be involved in p53-induced cell cycle arrest in G2/M phase by interfering with microtubule rearrangements that are required to enter mitosis. Overexpression delays G2/M phase progression. The protein is G2 and S phase-expressed protein 1 of Homo sapiens (Human).